Here is a 262-residue protein sequence, read N- to C-terminus: Methanethiol S-methyltransferase (262 aa).

The next 5 helical transmembrane spans lie at 22-42 (LYSL…IGFV), 55-75 (PGAS…LFAV), 100-120 (ATYV…WQPI), 134-154 (AVLT…TFLI), and 195-215 (GFLM…VFAL).

The protein belongs to the nurim family.

It is found in the membrane. It catalyses the reaction methanethiol + S-adenosyl-L-methionine = dimethyl sulfide + S-adenosyl-L-homocysteine + H(+). In terms of biological role, catalyzes the methylation of methanethiol (MeSH) to yield dimethylsulphide (DMS). This chain is Methanethiol S-methyltransferase, found in Pseudomonas deceptionensis.